Here is a 229-residue protein sequence, read N- to C-terminus: Potassium/proton antiporter CemA (229 aa).

4 helical membrane-spanning segments follow: residues 6–26 (AFIP…ISLC), 107–127 (IFNF…SFWG), 152–172 (FLIL…GWEL), and 190–210 (LSGL…YWIF).

This sequence belongs to the CemA family.

Its subcellular location is the plastid. The protein localises to the chloroplast inner membrane. The catalysed reaction is K(+)(in) + H(+)(out) = K(+)(out) + H(+)(in). In terms of biological role, contributes to K(+)/H(+) antiport activity by supporting proton efflux to control proton extrusion and homeostasis in chloroplasts in a light-dependent manner to modulate photosynthesis. Prevents excessive induction of non-photochemical quenching (NPQ) under continuous-light conditions. Indirectly promotes efficient inorganic carbon uptake into chloroplasts. This chain is Potassium/proton antiporter CemA, found in Aethionema cordifolium (Lebanon stonecress).